Consider the following 65-residue polypeptide: VESP-VB2 (65 aa).

An N-terminal signal peptide occupies residues 1–23; it reads MKMSILFLFALIASLACLQLTFA. AXPX repeat units lie at residues 23–26, 27–30, 31–34, 35–38, 39–42, 43–46, and 47–50; these read AAPA, ASPF, ANPG, ASPE, AAPL, ADPL, and ADPF. Positions 24–49 are excised as a propeptide; the sequence is APAASPFANPGASPEAAPLADPLADP. Position 62 is a leucine amide (L62).

The protein belongs to the MCD family. Mastoparan subfamily. In terms of tissue distribution, expressed by the venom gland.

It localises to the secreted. Functionally, antimicrobial peptide. Shows activity against both Gram-positive and -negative bacteria, as well against fungi. Also promotes important mast cell degranulation. Shows little hemolytic activity on rabbit and human erythrocytes. Its mast cell degranulation activity may be related to the activation of G-protein coupled receptors in mast cells as well as interaction with other proteins located in cell endosomal membranes in the mast cells. The sequence is that of VESP-VB2 from Vespa bicolor (Black shield wasp).